A 286-amino-acid chain; its full sequence is Bifunctional protein FolD (286 aa).

Residues 166 to 168, serine 191, and isoleucine 232 each bind NADP(+); that span reads GRS.

The protein belongs to the tetrahydrofolate dehydrogenase/cyclohydrolase family. Homodimer.

The catalysed reaction is (6R)-5,10-methylene-5,6,7,8-tetrahydrofolate + NADP(+) = (6R)-5,10-methenyltetrahydrofolate + NADPH. It catalyses the reaction (6R)-5,10-methenyltetrahydrofolate + H2O = (6R)-10-formyltetrahydrofolate + H(+). Its pathway is one-carbon metabolism; tetrahydrofolate interconversion. Functionally, catalyzes the oxidation of 5,10-methylenetetrahydrofolate to 5,10-methenyltetrahydrofolate and then the hydrolysis of 5,10-methenyltetrahydrofolate to 10-formyltetrahydrofolate. In Herpetosiphon aurantiacus (strain ATCC 23779 / DSM 785 / 114-95), this protein is Bifunctional protein FolD.